We begin with the raw amino-acid sequence, 277 residues long: Diaminopimelate epimerase (277 aa).

Substrate contacts are provided by N11 and N62. The Proton donor role is filled by C71. Substrate is bound by residues 72–73, N160, N193, and 211–212; these read GN and ER. Catalysis depends on C220, which acts as the Proton acceptor. 221–222 serves as a coordination point for substrate; the sequence is GT.

It belongs to the diaminopimelate epimerase family. Homodimer.

The protein resides in the cytoplasm. The catalysed reaction is (2S,6S)-2,6-diaminopimelate = meso-2,6-diaminopimelate. Its pathway is amino-acid biosynthesis; L-lysine biosynthesis via DAP pathway; DL-2,6-diaminopimelate from LL-2,6-diaminopimelate: step 1/1. Its function is as follows. Catalyzes the stereoinversion of LL-2,6-diaminopimelate (L,L-DAP) to meso-diaminopimelate (meso-DAP), a precursor of L-lysine. The chain is Diaminopimelate epimerase from Methanococcus maripaludis (strain C6 / ATCC BAA-1332).